The primary structure comprises 519 residues: Chaperone SurA (519 aa).

A signal peptide spans 1–31; sequence MMRSLHSLRRMSGTVLALMLAAGLPLSAAQA. Composition is skewed to low complexity over residues 31–45 and 197–207; these read AQPA…QKPA and PAAAQATRAPA. Disordered stretches follow at residues 31-50 and 196-221; these read AQPA…PAPS and NPAA…PAQS. Positions 223-324 constitute a PpiC 1 domain; the sequence is PAMLVLAQIL…NGFHILKVVD (102 aa). Positions 328–361 are disordered; that stretch reads GGQPAQAARPAPAPAPQQPSSFQEGPSVAAPQGP. The region spanning 364 to 463 is the PpiC 2 domain; sequence VTQTHARHIL…FGWHLIQVLE (100 aa).

It is found in the periplasm. The catalysed reaction is [protein]-peptidylproline (omega=180) = [protein]-peptidylproline (omega=0). Its function is as follows. Chaperone involved in the correct folding and assembly of outer membrane proteins. Recognizes specific patterns of aromatic residues and the orientation of their side chains, which are found more frequently in integral outer membrane proteins. May act in both early periplasmic and late outer membrane-associated steps of protein maturation. In Bordetella pertussis (strain Tohama I / ATCC BAA-589 / NCTC 13251), this protein is Chaperone SurA.